The primary structure comprises 268 residues: Glucosamine-6-phosphate deaminase (268 aa).

The active-site Proton acceptor; for enolization step is the D67. The active-site For ring-opening step is the N137. H139 functions as the Proton acceptor; for ring-opening step in the catalytic mechanism. E144 acts as the For ring-opening step in catalysis.

This sequence belongs to the glucosamine/galactosamine-6-phosphate isomerase family. NagB subfamily. Homohexamer.

It catalyses the reaction alpha-D-glucosamine 6-phosphate + H2O = beta-D-fructose 6-phosphate + NH4(+). Its pathway is amino-sugar metabolism; N-acetylneuraminate degradation; D-fructose 6-phosphate from N-acetylneuraminate: step 5/5. Functionally, catalyzes the reversible isomerization-deamination of glucosamine 6-phosphate (GlcN6P) to form fructose 6-phosphate (Fru6P) and ammonium ion. In Colwellia psychrerythraea (strain 34H / ATCC BAA-681) (Vibrio psychroerythus), this protein is Glucosamine-6-phosphate deaminase.